The chain runs to 495 residues: Probable cytosol aminopeptidase (495 aa).

2 residues coordinate Mn(2+): Lys-258 and Asp-263. Lys-270 is an active-site residue. Mn(2+) is bound by residues Asp-281, Asp-340, and Glu-342. The active site involves Arg-344.

Belongs to the peptidase M17 family. It depends on Mn(2+) as a cofactor.

It localises to the cytoplasm. It carries out the reaction Release of an N-terminal amino acid, Xaa-|-Yaa-, in which Xaa is preferably Leu, but may be other amino acids including Pro although not Arg or Lys, and Yaa may be Pro. Amino acid amides and methyl esters are also readily hydrolyzed, but rates on arylamides are exceedingly low.. It catalyses the reaction Release of an N-terminal amino acid, preferentially leucine, but not glutamic or aspartic acids.. In terms of biological role, presumably involved in the processing and regular turnover of intracellular proteins. Catalyzes the removal of unsubstituted N-terminal amino acids from various peptides. This is Probable cytosol aminopeptidase from Leptospira interrogans serogroup Icterohaemorrhagiae serovar copenhageni (strain Fiocruz L1-130).